We begin with the raw amino-acid sequence, 505 residues long: ATP synthase subunit alpha (505 aa).

169 to 176 (GDRQIGKT) lines the ATP pocket.

It belongs to the ATPase alpha/beta chains family. F-type ATPases have 2 components, CF(1) - the catalytic core - and CF(0) - the membrane proton channel. CF(1) has five subunits: alpha(3), beta(3), gamma(1), delta(1), epsilon(1). CF(0) has three main subunits: a(1), b(2) and c(9-12). The alpha and beta chains form an alternating ring which encloses part of the gamma chain. CF(1) is attached to CF(0) by a central stalk formed by the gamma and epsilon chains, while a peripheral stalk is formed by the delta and b chains.

It localises to the cell inner membrane. The enzyme catalyses ATP + H2O + 4 H(+)(in) = ADP + phosphate + 5 H(+)(out). Functionally, produces ATP from ADP in the presence of a proton gradient across the membrane. The alpha chain is a regulatory subunit. The sequence is that of ATP synthase subunit alpha from Desulfatibacillum aliphaticivorans.